Here is a 920-residue protein sequence, read N- to C-terminus: Anoctamin-4 (920 aa).

The Cytoplasmic segment spans residues 1-323 (METSSSGITN…LYFAWLGWYT (323 aa)). The disordered stretch occupies residues 38–64 (KDDDSLLHPGNLTSTSDDASRLEAGGE). The chain crosses the membrane as a helical span at residues 324 to 344 (GMLFPAAFIGLFVFLYGVITL). The Extracellular segment spans residues 345–389 (DHCQVSKEVCQATDIIMCPVCDKYCPFMRLSDSCVYAKVTHLFDN). The helical transmembrane segment at 390–410 (GATVFFAVFMAVWATVFLEFW) threads the bilayer. The Cytoplasmic portion of the chain corresponds to 411–470 (KRRRAVIAYDWDLIDWEEEEEEIRPQFEAKYSKKERMNPISGKPEPYQAFADKCSRLIVS). Residues 471 to 491 (ASGIFFMICVVIAAVFGIVIY) traverse the membrane as a helical segment. Over 492–512 (RVVTVSTFAAFKWALIRNNSQ) the chain is Extracellular. A glycan (N-linked (GlcNAc...) asparagine) is linked at asparagine 509. The helical transmembrane segment at 513–533 (VATTGTAVCINFCIIMLLNVL) threads the bilayer. Residues 534–560 (YEKVALLLTNLEQPRTESEWENSFTLK) are Cytoplasmic-facing. The helical transmembrane segment at 561–581 (MFLFQFVNLNSSTFYIAFFLG) threads the bilayer. The Extracellular portion of the chain corresponds to 582–680 (RFTGHPGAYL…AYGLFDEYLE (99 aa)). The helical transmembrane segment at 681 to 701 (MILQFGFTTIFVAAFPLAPLL) threads the bilayer. Residues 702 to 733 (ALLNNIIEIRLDAYKFVTQWRRPLASRAKDIG) are Cytoplasmic-facing. Residues 734 to 754 (IWYGILEGIGILSVITNAFVI) form a helical membrane-spanning segment. Topologically, residues 755 to 850 (AITSDFIPRL…QFWHVLAARL (96 aa)) are extracellular. Residues asparagine 789 and asparagine 802 are each glycosylated (N-linked (GlcNAc...) asparagine). A helical transmembrane segment spans residues 851-871 (AFIIVFEHLVFCIKHLISYLI). At 872–920 (PDLPKDLRDRMRREKYLIQEMMYEAELERLQKERKERKKNGKAHHNEWP) the chain is on the cytoplasmic side.

Belongs to the anoctamin family.

The protein localises to the cell membrane. The catalysed reaction is a 1,2-diacyl-sn-glycero-3-phospho-L-serine(in) = a 1,2-diacyl-sn-glycero-3-phospho-L-serine(out). It catalyses the reaction a beta-D-galactosyl-(1&lt;-&gt;1')-N-acylsphing-4-enine(out) = a beta-D-galactosyl-(1&lt;-&gt;1')-N-acylsphing-4-enine(in). It carries out the reaction a 1,2-diacyl-sn-glycero-3-phosphocholine(in) = a 1,2-diacyl-sn-glycero-3-phosphocholine(out). Its function is as follows. Has calcium-dependent phospholipid scramblase activity; scrambles phosphatidylserine, phosphatidylcholine and galactosylceramide. Does not exhibit calcium-activated chloride channel (CaCC) activity. This Bos taurus (Bovine) protein is Anoctamin-4.